Consider the following 263-residue polypeptide: Ribosomal RNA small subunit methyltransferase A (263 aa).

S-adenosyl-L-methionine-binding residues include asparagine 20, leucine 22, glycine 47, glutamate 68, aspartate 90, and asparagine 110.

The protein belongs to the class I-like SAM-binding methyltransferase superfamily. rRNA adenine N(6)-methyltransferase family. RsmA subfamily.

The protein localises to the cytoplasm. The catalysed reaction is adenosine(1518)/adenosine(1519) in 16S rRNA + 4 S-adenosyl-L-methionine = N(6)-dimethyladenosine(1518)/N(6)-dimethyladenosine(1519) in 16S rRNA + 4 S-adenosyl-L-homocysteine + 4 H(+). Specifically dimethylates two adjacent adenosines (A1518 and A1519) in the loop of a conserved hairpin near the 3'-end of 16S rRNA in the 30S particle. May play a critical role in biogenesis of 30S subunits. This is Ribosomal RNA small subunit methyltransferase A from Chlorobium limicola (strain DSM 245 / NBRC 103803 / 6330).